Here is a 158-residue protein sequence, read N- to C-terminus: MAGTNPRAARIAALIQRVVASSIERELHDKRLASITVTEVRVTNDLQIAKVYWTQLGHEGHEEGERKRAQQALDQAKGHLRSLVGHKAGLRLTPQLQFVFDEVPGEAHEIEDILAVAKKRDEELARVRATAQYAGDADPYKHDDEAEAEGDEFESDEE.

The tract at residues 130 to 158 is disordered; that stretch reads TAQYAGDADPYKHDDEAEAEGDEFESDEE. A compositionally biased stretch (acidic residues) spans 145–158; sequence EAEAEGDEFESDEE.

The protein belongs to the RbfA family. Monomer. Binds 30S ribosomal subunits, but not 50S ribosomal subunits or 70S ribosomes.

The protein localises to the cytoplasm. Its function is as follows. One of several proteins that assist in the late maturation steps of the functional core of the 30S ribosomal subunit. Associates with free 30S ribosomal subunits (but not with 30S subunits that are part of 70S ribosomes or polysomes). Required for efficient processing of 16S rRNA. May interact with the 5'-terminal helix region of 16S rRNA. This Bifidobacterium longum subsp. infantis (strain ATCC 15697 / DSM 20088 / JCM 1222 / NCTC 11817 / S12) protein is Ribosome-binding factor A.